Here is a 358-residue protein sequence, read N- to C-terminus: Presenilin hop-1 (358 aa).

The Cytoplasmic segment spans residues 1–12; that stretch reads MPRTKRVYSGKT. A helical transmembrane segment spans residues 13–33; it reads ITGVLYPVAICMLFVAINVKL. Over 34 to 57 the chain is Lumenal; the sequence is SQPEQQEQSKVVYGLFHSYDTADS. A helical membrane pass occupies residues 58-78; sequence GTITLYLIGFLILTTSLGVFC. Residues 79 to 86 are Cytoplasmic-facing; it reads YQMKFYKA. Residues 87 to 107 traverse the membrane as a helical segment; sequence IKVYVLANSIGILLVYSVFHF. At 108–115 the chain is on the lumenal side; it reads QRIAEAQS. The helical transmembrane segment at 116-136 threads the bilayer; sequence IPVSVPTFFFLILQFGGLGIT. The Cytoplasmic portion of the chain corresponds to 137 to 148; the sequence is CLHWKSHRRLHQ. Residues 149–169 traverse the membrane as a helical segment; the sequence is FYLIMLAGLTAIFILNILPDW. Residue threonine 170 is a topological domain, lumenal. Residues 171-191 traverse the membrane as a helical segment; it reads VWMALTAISFWDIVAVLTPCG. Aspartate 182 is an active-site residue. Residues 192–273 lie on the Cytoplasmic side of the membrane; that stretch reads PLKMLVETAN…EVREVEGTIR (82 aa). Positions 221–240 are enriched in polar residues; the sequence is EVDSPDTTRSNSTPLTEFNN. The disordered stretch occupies residues 221–242; that stretch reads EVDSPDTTRSNSTPLTEFNNSS. A helical transmembrane segment spans residues 274-294; that stretch reads LGMGDFVFYSLMLGNTVQTCP. The active site involves aspartate 278. The Lumenal portion of the chain corresponds to 295–297; that stretch reads LPT. The chain crosses the membrane as a helical span at residues 298–318; it reads VVACFVSNLVGLTITLPIVTL. At 319–321 the chain is on the cytoplasmic side; it reads SQT. The helical intramembrane region spans 322–342; the sequence is ALPALPFPLAIAAIFYFSSHI. The PAL motif lies at 324-326; sequence PAL. The Cytoplasmic portion of the chain corresponds to 343 to 358; sequence ALTPFTDLCTSQLILI.

This sequence belongs to the peptidase A22A family. Homodimer. Component of the gamma-secretase complex, a complex probably composed of the presenilin homodimer (sel-12, hop-1 or spe-4), nicastrin (aph-2), aph-1 and pen-2. Weakly expressed.

The protein localises to the endoplasmic reticulum membrane. Its subcellular location is the golgi apparatus membrane. In terms of biological role, probable catalytic subunit of the gamma-secretase complex, an endoprotease complex that catalyzes the intramembrane cleavage of integral membrane proteins such as Notch receptors (lin-12 or glp-1). Probably works redundantly of lin-12, which provides more presenilin function. The sequence is that of Presenilin hop-1 (hop-1) from Caenorhabditis elegans.